Here is a 1935-residue protein sequence, read N- to C-terminus: Myosin-7 (1935 aa).

Residues 32–81 (DLKKDVYVPDDKEEFVKAKILSREGGKVTAETEHGKTVTVKEDQVLQQNP) form the Myosin N-terminal SH3-like domain. Residues 85-778 (DKIEDMAMLT…LLGLLEEMRD (694 aa)) enclose the Myosin motor domain. Residue Lys129 is modified to N6,N6,N6-trimethyllysine. ATP is bound at residue 178-185 (GESGAGKT). Thr378 carries the phosphothreonine modification. 2 actin-binding regions span residues 655-677 (LNKL…IPNE) and 757-771 (KFGH…GLLG). The region spanning 781-810 (LSRIITRIQAQSRGVLSRMEFKKLLERRDS) is the IQ domain. The stretch at 839–1935 (LLKSAETEKE…DIGTKGLNEE (1097 aa)) forms a coiled coil. Phosphoserine is present on residues Ser1137 and Ser1269. The residue at position 1282 (Thr1282) is a Phosphothreonine. Tyr1308 is subject to Phosphotyrosine. Thr1309 bears the Phosphothreonine mark. Residue Ser1510 is modified to Phosphoserine. Residue Thr1513 is modified to Phosphothreonine. The segment at 1907-1935 (EERADIAESQVNKLRAKSRDIGTKGLNEE) is disordered. A compositionally biased stretch (basic and acidic residues) spans 1923–1935 (KSRDIGTKGLNEE).

Belongs to the TRAFAC class myosin-kinesin ATPase superfamily. Myosin family. In terms of assembly, muscle myosin is a hexameric protein that consists of 2 heavy chain subunits (MHC), 2 alkali light chain subunits (MLC) and 2 regulatory light chain subunits (MLC-2). Interacts with ECPAS. Interacts (via C-terminus) with LRRC39.

The protein localises to the cytoplasm. It is found in the myofibril. The protein resides in the sarcomere. Its function is as follows. Myosins are actin-based motor molecules with ATPase activity essential for muscle contraction. Forms regular bipolar thick filaments that, together with actin thin filaments, constitute the fundamental contractile unit of skeletal and cardiac muscle. In Sus scrofa (Pig), this protein is Myosin-7 (MYH7).